A 445-amino-acid chain; its full sequence is Rab GDP dissociation inhibitor beta (445 aa).

N-acetylmethionine is present on M1. K57 is modified (N6-succinyllysine). S61 bears the Phosphoserine mark. N6-acetyllysine is present on K112. S130 is subject to Phosphoserine. K269 carries the N6-acetyllysine modification. S382 carries the phosphoserine modification.

It belongs to the Rab GDI family. As to quaternary structure, interacts with RHOH. Interacts with the GDP-bound inactive forms of RAB3A, RAB3B, RAB3C, RAB5A, RAB5B, RAB5C, RAB8A, RAB8B, RAB10, RAB12, RAB35, and RAB43; binds RAB3D to a lesser extent. Interacts with DZIP1; this interaction negatively regulates the interaction of GDI2 with GDP-bound RAB8A. Ubiquitous.

It localises to the cytoplasm. Its subcellular location is the membrane. The protein resides in the golgi apparatus. The protein localises to the trans-Golgi network. Its function is as follows. GDP-dissociation inhibitor preventing the GDP to GTP exchange of most Rab proteins. By keeping these small GTPases in their inactive GDP-bound form regulates intracellular membrane trafficking. Negatively regulates protein transport to the cilium and ciliogenesis through the inhibition of RAB8A. This is Rab GDP dissociation inhibitor beta (GDI2) from Homo sapiens (Human).